A 225-amino-acid chain; its full sequence is DnaA regulatory inactivator Hda (225 aa).

It belongs to the DnaA family. HdA subfamily. In terms of assembly, the active form seems to be an ADP-bound monomer. Forms the RIDA complex (regulatory inactivation of DnaA) of ATP-DnaA, ADP-Hda and the DNA-loaded beta sliding clamp (dnaN).

In terms of biological role, mediates the interaction of DNA replication initiator protein DnaA with DNA polymerase subunit beta sliding clamp (dnaN). Stimulates hydrolysis of ATP-DnaA to ADP-DnaA, rendering DnaA inactive for reinitiation, a process called regulatory inhibition of DnaA or RIDA. This chain is DnaA regulatory inactivator Hda, found in Klebsiella pneumoniae (strain 342).